Consider the following 301-residue polypeptide: MNVTLRPPLTTAPRRPDGAGSVQVQLDPNVVIGTAKVFSVYGKGGIGKSTTSSNLSVALSKLGKRVLQIGCDPKHDSTFTLTKRLVPTVIDILEQVNFHAEELRPEDFVYQGYNGVMCVEAGGPPAGTGCGGYVVGQTVKLLKEHHLLEDTDVVIFDVLGDVVCGGFAAPLQHADRALIVAANDFDSIFAMNRIVAAIQAKSRNYPVRLGGVIANRSAATDQIDKFNERAGLKTVAHFPDLDVIRKSRLKKCTLFEMEPSPDVERAQNEYLRLAASLLAGVEPMQAVPLKDRDIFDLLGFD.

The span at 1–13 shows a compositional bias: low complexity; it reads MNVTLRPPLTTAP. The disordered stretch occupies residues 1 to 21; that stretch reads MNVTLRPPLTTAPRRPDGAGS. ATP-binding positions include 45–50 and Lys-74; that span reads GIGKST. Ser-49 provides a ligand contact to Mg(2+). Residues Cys-130 and Cys-164 each coordinate [4Fe-4S] cluster. ATP-binding positions include 215–216 and 239–241; these read NR and PDL.

This sequence belongs to the NifH/BchL/ChlL family. Homodimer. Protochlorophyllide reductase is composed of three subunits; BchL, BchN and BchB. It depends on [4Fe-4S] cluster as a cofactor.

It carries out the reaction chlorophyllide a + oxidized 2[4Fe-4S]-[ferredoxin] + 2 ADP + 2 phosphate = protochlorophyllide a + reduced 2[4Fe-4S]-[ferredoxin] + 2 ATP + 2 H2O. It functions in the pathway porphyrin-containing compound metabolism; bacteriochlorophyll biosynthesis (light-independent). In terms of biological role, component of the dark-operative protochlorophyllide reductase (DPOR) that uses Mg-ATP and reduced ferredoxin to reduce ring D of protochlorophyllide (Pchlide) to form chlorophyllide a (Chlide). This reaction is light-independent. The L component serves as a unique electron donor to the NB-component of the complex, and binds Mg-ATP. The sequence is that of Light-independent protochlorophyllide reductase iron-sulfur ATP-binding protein from Bradyrhizobium sp. (strain BTAi1 / ATCC BAA-1182).